A 438-amino-acid chain; its full sequence is MSGIWHTDDVHLTSAGADFGNCIHAKPPVVVVPRTVADVQEALRYTAARNLSLAVRGSGHSTYGQCQADGGVVLDMKRFNTVHDVRSGQATIDAGVRWSDVVAATLSRQQTPPVLTDYLGTTVGGTLSVGGFGGSSHGFGLQTDNVDSLAVVTGSGDFRECSAVSNSELFDAVRGGLGQFGVIVNATIRLTAAHESVRQYKLQYSNLGVFLGDQLRAMSNRLFDHVQGRIRVDADGHLRYRLDLAKYFTPPRRPDDDALLSSLQYDSCAEYNSDVDYGDFINRMADQELDLRHTGEWFYPHPWASLLIPADKIEQFIETTSSSLTDDLGNSGLIMVYPIPTTPITAPFIPIPHCDTFFMLAVLRTASPGAEARMIASNRLLYEQARDVGGVAYAVNAVPMSPGDWCTHFGSRWQAIARAKRRFDPYRILAPGYRMSFD.

The 171-residue stretch at 23–193 folds into the FAD-binding PCMH-type domain; that stretch reads IHAKPPVVVV…VNATIRLTAA (171 aa). Residues 55-59, 60-61, Q65, D117, T122, 128-132, I183, Y393, and 430-433 each bind FAD; these read VRGSG, HS, SVGGF, and APGY. Pros-8alpha-FAD histidine is present on H60.

The protein belongs to the oxygen-dependent FAD-linked oxidoreductase family. FAD serves as cofactor.

In terms of biological role, the FAS-operon encodes genes involved in cytokinin production and in host plant fasciation (leafy gall). This is an uncharacterized protein from Rhodococcoides fascians (Rhodococcus fascians).